The following is a 495-amino-acid chain: Internal alternative NAD(P)H-ubiquinone oxidoreductase A1, mitochondrial (495 aa).

Residues 1–41 constitute a mitochondrion transit peptide; it reads MPWFKNLIKISKTITNQSSSYKSITPLASPLLTQFLQFTKQ. 61 to 91 contributes to the FAD binding site; the sequence is RIVVLGSGWAGCRLMKDIDTNIYDVVCVSPR. 228 to 264 provides a ligand contact to NAD(+); the sequence is LHCVVVGGGPTGVEFSGELSDFILKDVHQRYAHVKDY. Positions 486-495 match the Microbody targeting signal motif; the sequence is LVFGRDISRI.

Belongs to the NADH dehydrogenase family. Requires FAD as cofactor.

Its subcellular location is the mitochondrion inner membrane. It localises to the peroxisome. The catalysed reaction is a quinone + NADH + H(+) = a quinol + NAD(+). It catalyses the reaction a ubiquinone + NADH + H(+) = a ubiquinol + NAD(+). Functionally, alternative NADH-ubiquinone oxidoreductase which catalyzes the oxidation of mitochondrial NADH does not translocate protons across the inner mitochondrial membrane. The protein is Internal alternative NAD(P)H-ubiquinone oxidoreductase A1, mitochondrial (NDA1) of Solanum tuberosum (Potato).